A 329-amino-acid polypeptide reads, in one-letter code: DNA-directed RNA polymerase subunit alpha (329 aa).

An alpha N-terminal domain (alpha-NTD) region spans residues 1 to 235 (MVREKVKVST…DLFIPFLHTE (235 aa)). The alpha C-terminal domain (alpha-CTD) stretch occupies residues 269–329 (IALKYIFIDQ…KQILGILEKK (61 aa)).

Belongs to the RNA polymerase alpha chain family. In plastids the minimal PEP RNA polymerase catalytic core is composed of four subunits: alpha, beta, beta', and beta''. When a (nuclear-encoded) sigma factor is associated with the core the holoenzyme is formed, which can initiate transcription.

The protein localises to the plastid. Its subcellular location is the chloroplast. It catalyses the reaction RNA(n) + a ribonucleoside 5'-triphosphate = RNA(n+1) + diphosphate. Functionally, DNA-dependent RNA polymerase catalyzes the transcription of DNA into RNA using the four ribonucleoside triphosphates as substrates. This chain is DNA-directed RNA polymerase subunit alpha, found in Gossypium hirsutum (Upland cotton).